The following is a 289-amino-acid chain: Phosphatidylserine decarboxylase proenzyme (289 aa).

Catalysis depends on charge relay system; for autoendoproteolytic cleavage activity residues Asp92, His149, and Ser254. Catalysis depends on Ser254, which acts as the Schiff-base intermediate with substrate; via pyruvic acid; for decarboxylase activity. Ser254 bears the Pyruvic acid (Ser); by autocatalysis mark.

It belongs to the phosphatidylserine decarboxylase family. PSD-B subfamily. Prokaryotic type I sub-subfamily. In terms of assembly, heterodimer of a large membrane-associated beta subunit and a small pyruvoyl-containing alpha subunit. Pyruvate is required as a cofactor. Post-translationally, is synthesized initially as an inactive proenzyme. Formation of the active enzyme involves a self-maturation process in which the active site pyruvoyl group is generated from an internal serine residue via an autocatalytic post-translational modification. Two non-identical subunits are generated from the proenzyme in this reaction, and the pyruvate is formed at the N-terminus of the alpha chain, which is derived from the carboxyl end of the proenzyme. The autoendoproteolytic cleavage occurs by a canonical serine protease mechanism, in which the side chain hydroxyl group of the serine supplies its oxygen atom to form the C-terminus of the beta chain, while the remainder of the serine residue undergoes an oxidative deamination to produce ammonia and the pyruvoyl prosthetic group on the alpha chain. During this reaction, the Ser that is part of the protease active site of the proenzyme becomes the pyruvoyl prosthetic group, which constitutes an essential element of the active site of the mature decarboxylase.

The protein resides in the cell membrane. It catalyses the reaction a 1,2-diacyl-sn-glycero-3-phospho-L-serine + H(+) = a 1,2-diacyl-sn-glycero-3-phosphoethanolamine + CO2. It participates in phospholipid metabolism; phosphatidylethanolamine biosynthesis; phosphatidylethanolamine from CDP-diacylglycerol: step 2/2. In terms of biological role, catalyzes the formation of phosphatidylethanolamine (PtdEtn) from phosphatidylserine (PtdSer). The protein is Phosphatidylserine decarboxylase proenzyme of Pseudomonas aeruginosa (strain UCBPP-PA14).